The chain runs to 272 residues: Ribonuclease HII (272 aa).

The RNase H type-2 domain occupies lysine 87 to leucine 272. 3 residues coordinate a divalent metal cation: aspartate 93, glutamate 94, and aspartate 188.

It belongs to the RNase HII family. The cofactor is Mn(2+). Mg(2+) serves as cofactor.

Its subcellular location is the cytoplasm. It catalyses the reaction Endonucleolytic cleavage to 5'-phosphomonoester.. Functionally, endonuclease that specifically degrades the RNA of RNA-DNA hybrids. The polypeptide is Ribonuclease HII (Clostridium perfringens (strain ATCC 13124 / DSM 756 / JCM 1290 / NCIMB 6125 / NCTC 8237 / Type A)).